The sequence spans 408 residues: GTPase Obg (408 aa).

Positions 1–159 constitute an Obg domain; the sequence is MKFFDEARIE…RNLHLELKVL (159 aa). Positions 160–334 constitute an OBG-type G domain; the sequence is ADVGLLGMPN…LIFALQDFLD (175 aa). Residues 166–173, 191–195, 213–216, 284–287, and 315–317 each bind GTP; these read GMPNAGKS, FTTLQ, DIPG, NKLD, and SAL. Positions 173 and 193 each coordinate Mg(2+). The interval 385–408 is disordered; that stretch reads AEDALAEDALDDDADGEDADPNAR.

Belongs to the TRAFAC class OBG-HflX-like GTPase superfamily. OBG GTPase family. As to quaternary structure, monomer. Mg(2+) serves as cofactor.

It localises to the cytoplasm. Functionally, an essential GTPase which binds GTP, GDP and possibly (p)ppGpp with moderate affinity, with high nucleotide exchange rates and a fairly low GTP hydrolysis rate. Plays a role in control of the cell cycle, stress response, ribosome biogenesis and in those bacteria that undergo differentiation, in morphogenesis control. The polypeptide is GTPase Obg (Azoarcus sp. (strain BH72)).